The primary structure comprises 337 residues: Inositol 2-dehydrogenase (337 aa).

This sequence belongs to the Gfo/Idh/MocA family. As to quaternary structure, homotetramer.

It carries out the reaction myo-inositol + NAD(+) = scyllo-inosose + NADH + H(+). Its function is as follows. Involved in the oxidation of myo-inositol (MI) to 2-keto-myo-inositol (2KMI or 2-inosose). The sequence is that of Inositol 2-dehydrogenase from Klebsiella pneumoniae subsp. pneumoniae (strain ATCC 700721 / MGH 78578).